Here is a 100-residue protein sequence, read N- to C-terminus: Aspartyl/glutamyl-tRNA(Asn/Gln) amidotransferase subunit C (100 aa).

Belongs to the GatC family. In terms of assembly, heterotrimer of A, B and C subunits.

The enzyme catalyses L-glutamyl-tRNA(Gln) + L-glutamine + ATP + H2O = L-glutaminyl-tRNA(Gln) + L-glutamate + ADP + phosphate + H(+). It carries out the reaction L-aspartyl-tRNA(Asn) + L-glutamine + ATP + H2O = L-asparaginyl-tRNA(Asn) + L-glutamate + ADP + phosphate + 2 H(+). In terms of biological role, allows the formation of correctly charged Asn-tRNA(Asn) or Gln-tRNA(Gln) through the transamidation of misacylated Asp-tRNA(Asn) or Glu-tRNA(Gln) in organisms which lack either or both of asparaginyl-tRNA or glutaminyl-tRNA synthetases. The reaction takes place in the presence of glutamine and ATP through an activated phospho-Asp-tRNA(Asn) or phospho-Glu-tRNA(Gln). This Streptococcus equi subsp. equi (strain 4047) protein is Aspartyl/glutamyl-tRNA(Asn/Gln) amidotransferase subunit C.